A 430-amino-acid chain; its full sequence is Tol-Pal system protein TolB (430 aa).

Positions 1-26 (MSLMTKLGLRTLVASCLIAVGGAANA) are cleaved as a signal peptide.

This sequence belongs to the TolB family. In terms of assembly, the Tol-Pal system is composed of five core proteins: the inner membrane proteins TolA, TolQ and TolR, the periplasmic protein TolB and the outer membrane protein Pal. They form a network linking the inner and outer membranes and the peptidoglycan layer.

The protein localises to the periplasm. Part of the Tol-Pal system, which plays a role in outer membrane invagination during cell division and is important for maintaining outer membrane integrity. The chain is Tol-Pal system protein TolB from Paraburkholderia xenovorans (strain LB400).